The following is a 113-amino-acid chain: MWDPLVNEFPDSVHGLRCMLAIKYLQALEDTYEPSTLGHDLVRDLISVIRARNYVEATRRYHHFHSRLEGSSKAELRQPIQEPCYCPHCPRHKSKTGLDEQAHVQKAHDVQDV.

The tract at residues 94–113 (SKTGLDEQAHVQKAHDVQDV) is disordered. Positions 96-113 (TGLDEQAHVQKAHDVQDV) are enriched in basic and acidic residues.

This sequence belongs to the geminiviridae protein AV2/V2 family. In terms of assembly, interacts with host SGS3.

It localises to the host cytoplasm. The protein resides in the host perinuclear region. Its function is as follows. Through its interaction with host SGS3, acts as a suppressor of RNA-mediated gene silencing, also known as post-transcriptional gene silencing (PTGS), a mechanism of plant viral defense that limits the accumulation of viral RNAs. This is an uncharacterized protein from African cassava mosaic virus (isolate Nigerian) (ACMV).